Here is a 244-residue protein sequence, read N- to C-terminus: rRNA adenine N-6-methyltransferase (244 aa).

S-adenosyl-L-methionine-binding residues include N11, I13, G38, E59, D84, and S101.

The protein belongs to the class I-like SAM-binding methyltransferase superfamily. rRNA adenine N(6)-methyltransferase family.

Involved in erythromycin resistance. The chain is rRNA adenine N-6-methyltransferase (ermG) from Lysinibacillus sphaericus (Bacillus sphaericus).